Reading from the N-terminus, the 336-residue chain is Cytoskeleton protein RodZ (336 aa).

At 1-111 (MNTEATHDQN…LGKRRKKRDG (111 aa)) the chain is on the cytoplasmic side. The region spanning 19–71 (LRNAREQLGLSQQAVAERLCLKVSTVRDIEEDKAPSDLASTFLRGYIRSYARL) is the HTH cro/C1-type domain. Positions 30-49 (QQAVAERLCLKVSTVRDIEE) form a DNA-binding region, H-T-H motif. A helical; Signal-anchor for type II membrane protein membrane pass occupies residues 112-132 (WLMSFTWLVLFVVVGLTGAWW). At 133–336 (WQNHKAQQEE…TLNAEPTPAQ (204 aa)) the chain is on the periplasmic side. The disordered stretch occupies residues 155–243 (NADKDSGQSV…PSALPTSQAG (89 aa)). Residues 161-175 (GQSVPLDTGAVTSQD) show a composition bias toward polar residues. Low complexity-rich tracts occupy residues 176–214 (TTPA…VVAP) and 221–243 (TAAT…SQAG).

This sequence belongs to the RodZ family.

The protein resides in the cell inner membrane. Its function is as follows. Cytoskeletal protein that is involved in cell-shape control through regulation of the length of the long axis. This is Cytoskeleton protein RodZ from Salmonella newport (strain SL254).